The sequence spans 434 residues: Nicotinate phosphoribosyltransferase (434 aa).

Residue His-242 is modified to Phosphohistidine; by autocatalysis.

The protein belongs to the NAPRTase family. Transiently phosphorylated on a His residue during the reaction cycle. Phosphorylation strongly increases the affinity for substrates and increases the rate of nicotinate D-ribonucleotide production. Dephosphorylation regenerates the low-affinity form of the enzyme, leading to product release.

It carries out the reaction nicotinate + 5-phospho-alpha-D-ribose 1-diphosphate + ATP + H2O = nicotinate beta-D-ribonucleotide + ADP + phosphate + diphosphate. It participates in cofactor biosynthesis; NAD(+) biosynthesis; nicotinate D-ribonucleotide from nicotinate: step 1/1. Its function is as follows. Catalyzes the synthesis of beta-nicotinate D-ribonucleotide from nicotinate and 5-phospho-D-ribose 1-phosphate at the expense of ATP. This Rhizobium etli (strain ATCC 51251 / DSM 11541 / JCM 21823 / NBRC 15573 / CFN 42) protein is Nicotinate phosphoribosyltransferase.